Consider the following 314-residue polypeptide: MKKNPKISLIGSGNIGGMLAHLISLKNLGDIVLFDVAEGIPQGKALDIMQANTLAGSDIKIKGTNDYKDIEGSDAIIITAGLPRKPGMSRDDLISVNTGIMKSVAENVKKYAPNAFVIVITNPLDVMVYVMLKESGLPHNKVIGMAGVLDSSRFNFFLAEEFKVSTNSVSSIVLGGHGDAMVPLARYSTVKGVPIPDLVKMGLSTNERIEKIIDRTRNGGGEIVALLKTGSAYYAPAASAVEMLESYLQDKRQILTCAAYLQGEYGVKDLYAGVPIIIGKNGVEKVIELQLTTNEQALFDKSVDGVRKLIEAVK.

NAD(+) is bound by residues 11–16 and aspartate 35; that span reads GSGNIG. Positions 84 and 90 each coordinate substrate. Residues asparagine 97 and 120–122 each bind NAD(+); that span reads ITN. Substrate-binding residues include asparagine 122 and arginine 153. Residue histidine 177 is the Proton acceptor of the active site.

This sequence belongs to the LDH/MDH superfamily. MDH type 3 family.

The enzyme catalyses (S)-malate + NAD(+) = oxaloacetate + NADH + H(+). In terms of biological role, catalyzes the reversible oxidation of malate to oxaloacetate. This Rickettsia bellii (strain OSU 85-389) protein is Malate dehydrogenase.